The primary structure comprises 130 residues: uncharacterized protein (130 aa).

The N-terminal stretch at 1–19 (MLAPLFLCCLRNLFRKLIS) is a signal peptide.

It localises to the secreted. This is an uncharacterized protein from Homo sapiens (Human).